A 276-amino-acid chain; its full sequence is Large ribosomal subunit protein uL2 (276 aa).

Disordered regions lie at residues 14–58 (RNAS…GGGH) and 221–276 (TRGE…KNRK). Residues 16-27 (ASVSDFSELTRS) are compositionally biased toward polar residues. Over residues 255-276 (RRPKKASNKMIVRRRPSGKNRK) the composition is skewed to basic residues.

It belongs to the universal ribosomal protein uL2 family. Part of the 50S ribosomal subunit. Forms a bridge to the 30S subunit in the 70S ribosome.

Its function is as follows. One of the primary rRNA binding proteins. Required for association of the 30S and 50S subunits to form the 70S ribosome, for tRNA binding and peptide bond formation. It has been suggested to have peptidyltransferase activity; this is somewhat controversial. Makes several contacts with the 16S rRNA in the 70S ribosome. This is Large ribosomal subunit protein uL2 from Bifidobacterium longum subsp. infantis (strain ATCC 15697 / DSM 20088 / JCM 1222 / NCTC 11817 / S12).